Reading from the N-terminus, the 487-residue chain is Virulence sensor histidine kinase PhoQ (487 aa).

At 1-16 the chain is on the cytoplasmic side; the sequence is MNKFARHFLPLSLRVR. The helical transmembrane segment at 17–37 threads the bilayer; the sequence is FLLATAGVVLVLSLAYGIVAL. Topologically, residues 38-193 are periplasmic; it reads VGYSVSFDKT…ELKRSYMVWS (156 aa). A divalent metal cation-binding residues include Asp-151 and Asp-152. A helical membrane pass occupies residues 194–214; sequence WFVYVLAANLLLVIPLLWIAA. One can recognise an HAMP domain in the interval 215–266; it reads WWSLRPIEALAREVRELEDHHREMLNPETTRELTSLVRNLNQLLKSERERYN. Residues 215 to 487 are Cytoplasmic-facing; that stretch reads WWSLRPIEAL…GRQHPTQKEE (273 aa). In terms of domain architecture, Histidine kinase spans 274–481; sequence DLTHSLKTPL…RMEVVFGRQH (208 aa). The residue at position 277 (His-277) is a Phosphohistidine; by autocatalysis. Asn-386 contacts Mg(2+). ATP contacts are provided by residues 386–394, 416–421, and 435–447; these read NVLDNACKY, DDGPGI, and RADT…GVGL. Gln-443 lines the Mg(2+) pocket.

In terms of assembly, homodimer.

It is found in the cell inner membrane. It catalyses the reaction ATP + protein L-histidine = ADP + protein N-phospho-L-histidine.. Member of the two-component regulatory system PhoP/PhoQ which regulates the expression of genes involved in virulence and resistance to host defense antimicrobial peptides. In low periplasmic Mg(2+), PhoQ functions as a membrane-associated protein kinase that undergoes autophosphorylation and subsequently transfers the phosphate to PhoP, which results in the expression of PhoP-activated genes (PAG) and repression of PhoP-repressed genes (PRG). In high periplasmic Mg(2+), acts as a protein phosphatase that dephosphorylates phospho-PhoP, which results in the repression of PAG and may lead to expression of some PRG. In Salmonella paratyphi A (strain ATCC 9150 / SARB42), this protein is Virulence sensor histidine kinase PhoQ (phoQ).